The sequence spans 101 residues: Small ribosomal subunit protein uS14 (101 aa).

This sequence belongs to the universal ribosomal protein uS14 family. As to quaternary structure, part of the 30S ribosomal subunit. Contacts proteins S3 and S10.

In terms of biological role, binds 16S rRNA, required for the assembly of 30S particles and may also be responsible for determining the conformation of the 16S rRNA at the A site. In Shewanella piezotolerans (strain WP3 / JCM 13877), this protein is Small ribosomal subunit protein uS14.